Reading from the N-terminus, the 232-residue chain is Phosphatidylserine decarboxylase proenzyme (232 aa).

Ser190 serves as the catalytic Schiff-base intermediate with substrate; via pyruvic acid. Ser190 bears the Pyruvic acid (Ser); by autocatalysis mark.

This sequence belongs to the phosphatidylserine decarboxylase family. PSD-A subfamily. In terms of assembly, heterodimer of a large membrane-associated beta subunit and a small pyruvoyl-containing alpha subunit. Pyruvate serves as cofactor. Is synthesized initially as an inactive proenzyme. Formation of the active enzyme involves a self-maturation process in which the active site pyruvoyl group is generated from an internal serine residue via an autocatalytic post-translational modification. Two non-identical subunits are generated from the proenzyme in this reaction, and the pyruvate is formed at the N-terminus of the alpha chain, which is derived from the carboxyl end of the proenzyme. The post-translation cleavage follows an unusual pathway, termed non-hydrolytic serinolysis, in which the side chain hydroxyl group of the serine supplies its oxygen atom to form the C-terminus of the beta chain, while the remainder of the serine residue undergoes an oxidative deamination to produce ammonia and the pyruvoyl prosthetic group on the alpha chain.

It localises to the cell membrane. It carries out the reaction a 1,2-diacyl-sn-glycero-3-phospho-L-serine + H(+) = a 1,2-diacyl-sn-glycero-3-phosphoethanolamine + CO2. Its pathway is phospholipid metabolism; phosphatidylethanolamine biosynthesis; phosphatidylethanolamine from CDP-diacylglycerol: step 2/2. Its function is as follows. Catalyzes the formation of phosphatidylethanolamine (PtdEtn) from phosphatidylserine (PtdSer). In Rhizobium etli (strain CIAT 652), this protein is Phosphatidylserine decarboxylase proenzyme.